Consider the following 504-residue polypeptide: Maturase K (504 aa).

This sequence belongs to the intron maturase 2 family. MatK subfamily.

It is found in the plastid. The protein resides in the chloroplast. Usually encoded in the trnK tRNA gene intron. Probably assists in splicing its own and other chloroplast group II introns. The chain is Maturase K from Vigna mungo (Black gram).